The chain runs to 921 residues: Translation initiation factor IF-2 (921 aa).

Positions 1-296 are disordered; it reads MADNNTPGDK…PGPQKQRGRL (296 aa). Low complexity predominate over residues 80–89; that stretch reads RPSGPRPGSS. A compositionally biased stretch (basic and acidic residues) spans 116 to 182; the sequence is ARVRDMEERR…AKKRFGEGEA (67 aa). Residues 183-257 show a composition bias toward low complexity; that stretch reads PRPATAAPQQ…LGRAPGVAAG (75 aa). Positions 417–586 constitute a tr-type G domain; it reads PRSPVVTVMG…MIALQADILD (170 aa). Positions 426–433 are G1; sequence GHVDHGKT. 426 to 433 provides a ligand contact to GTP; it reads GHVDHGKT. The G2 stretch occupies residues 451 to 455; the sequence is GITQH. Residues 474-477 form a G3 region; sequence DTPG. GTP contacts are provided by residues 474–478 and 528–531; these read DTPGH and NKID. Positions 528–531 are G4; sequence NKID. The segment at 564-566 is G5; the sequence is SAK.

The protein belongs to the TRAFAC class translation factor GTPase superfamily. Classic translation factor GTPase family. IF-2 subfamily.

It is found in the cytoplasm. In terms of biological role, one of the essential components for the initiation of protein synthesis. Protects formylmethionyl-tRNA from spontaneous hydrolysis and promotes its binding to the 30S ribosomal subunits. Also involved in the hydrolysis of GTP during the formation of the 70S ribosomal complex. This Bradyrhizobium sp. (strain BTAi1 / ATCC BAA-1182) protein is Translation initiation factor IF-2.